A 332-amino-acid chain; its full sequence is MNKLITIERHFLEQQKSHPEATGELTDLLNDVAFAAKLVRREVVRAGLADILGMAGTTNVQGEEVKKLDLFANEKIINAIGEHGRFALMGSEENEGTIIPPNNDTGRYILLFDPLDGSSNIDVNVSVGTIFSIYRLTGDDPKEADINDCLQKGSEQVAAGYVIYGSSVMMVYTTGQGVHGFTYDPTIGEFLLSHENITTPERGKYYSINEGSLHQFNDSTVNFINYLKEDDEATGRPYSTRYIGSLVADFHRNLMTGGVFVYPATKGHPNGKLRLMYEANPLAFICEQAGGRATNGKERILDINPTELHQRTPLYIGSKEDVLKAEEFEKEG.

4 residues coordinate Mg(2+): Glu-92, Asp-113, Leu-115, and Asp-116. Substrate contacts are provided by residues 116–119 (DGSS), Asn-209, Tyr-242, and Lys-272. Glu-278 provides a ligand contact to Mg(2+).

The protein belongs to the FBPase class 1 family. Homotetramer. It depends on Mg(2+) as a cofactor.

The protein localises to the cytoplasm. The catalysed reaction is beta-D-fructose 1,6-bisphosphate + H2O = beta-D-fructose 6-phosphate + phosphate. It functions in the pathway carbohydrate biosynthesis; Calvin cycle. This Prosthecochloris aestuarii (strain DSM 271 / SK 413) protein is Fructose-1,6-bisphosphatase class 1.